We begin with the raw amino-acid sequence, 346 residues long: UPF0324 membrane protein FN0533 (346 aa).

10 helical membrane passes run 5–22, 27–49, 62–81, 86–108, 115–137, 147–169, 216–233, 248–270, 283–305, and 315–337; these read LYGIILCFLLALPAWKLG, LVGGPVFGIIIGIVIAILLKNRA, VLQYAVILLGFGLNLQTIIS, SLPIIVSTISTSLIIAYILAKLI, VILIGVGSSICGGSAIAATAPVI, AISVIFLFNVIAALIFPTLGDIL, LTRTLAIIPITLFLAVYN, IFPMFIVYFILASIITTVCNYFI, INNVFSFFKHLSKFFIIMAMVAI, and ILSGAKPLTLGFCCWFAISLVSI.

This sequence belongs to the UPF0324 family.

The protein resides in the cell membrane. The chain is UPF0324 membrane protein FN0533 from Fusobacterium nucleatum subsp. nucleatum (strain ATCC 25586 / DSM 15643 / BCRC 10681 / CIP 101130 / JCM 8532 / KCTC 2640 / LMG 13131 / VPI 4355).